A 533-amino-acid chain; its full sequence is Protein trichome birefringence-like 18 (533 aa).

Residues 21 to 41 form a helical; Signal-anchor for type II membrane protein membrane-spanning segment; the sequence is VSTVAIAIGGLASFFVFGLLL. Residues 93–171 form a disordered region; it reads SDSSSGLPVV…PDDVSETASA (79 aa). Residues 113 to 154 show a composition bias toward basic and acidic residues; that stretch reads SSDRKLETPLTQEKEDLVSSDITEKTDVQSGERETNVSKAED. The GDS motif motif lies at 248–250; it reads GDS. The segment at 475-502 is disordered; the sequence is HDGHPGPFRSPDPNKITKRGPDGRPPPQ. A DCXHWCLPGXXDXWN motif motif is present at residues 503–517; it reads DCLHWCMPGPVDTWN.

The protein belongs to the PC-esterase family. TBL subfamily.

The protein localises to the membrane. Functionally, may act as a bridging protein that binds pectin and other cell wall polysaccharides. Probably involved in maintaining esterification of pectins. May be involved in the specific O-acetylation of cell wall polymers. This is Protein trichome birefringence-like 18 (TBL18) from Arabidopsis thaliana (Mouse-ear cress).